Reading from the N-terminus, the 376-residue chain is Putative MSV199 domain-containing protein 468L (376 aa).

The stretch at 178–261 (QKREKETMSR…VNTVQKKLDI (84 aa)) forms a coiled coil.

This Invertebrate iridescent virus 6 (IIV-6) protein is Putative MSV199 domain-containing protein 468L.